We begin with the raw amino-acid sequence, 225 residues long: Glutathione S-transferase zeta class (225 aa).

One can recognise a GST N-terminal domain in the interval Pro-10–Pro-91. Residues Ser-20–Arg-25, Gln-49, Val-63, Asp-75–Ser-76, Gln-115, and Asn-119–Ala-121 each bind glutathione. In terms of domain architecture, GST C-terminal spans Asp-96–Ser-221.

The protein belongs to the GST superfamily. Zeta family.

The protein resides in the cytoplasm. It carries out the reaction RX + glutathione = an S-substituted glutathione + a halide anion + H(+). This chain is Glutathione S-transferase zeta class, found in Euphorbia esula (Leafy spurge).